We begin with the raw amino-acid sequence, 411 residues long: Solute carrier RCH1 (411 aa).

Residues 1-17 are Cytoplasmic-facing; that stretch reads MSLETFRESKAYKWTSK. The helical transmembrane segment at 18-38 threads the bilayer; that stretch reads VISFLIGQWFFIFLGVFIALA. The Extracellular portion of the chain corresponds to 39-52; the sequence is HSYPEFAKQGGTIR. The chain crosses the membrane as a helical span at residues 53–73; that stretch reads AEYSIGYGAVAVIFLISGLSM. The Cytoplasmic portion of the chain corresponds to 74 to 89; it reads STKQLLVNVANWRAHF. Residues 90–110 form a helical membrane-spanning segment; sequence TVLSMSFLVTSAIIYGIASGI. The Extracellular segment spans residues 111–120; it reads KASHNGQIDD. The helical transmembrane segment at 121–141 threads the bilayer; it reads WLLIGLIVTHACPTTVSSNVV. Topologically, residues 142–150 are cytoplasmic; it reads MTKQAHGND. A helical membrane pass occupies residues 151-171; that stretch reads ILTLCEVFIGNVLGAFITPAL. The Extracellular portion of the chain corresponds to 172–204; sequence LQMYMRGTWEIGNPSHQTQGDSTVQELYAHTMK. The helical transmembrane segment at 205–225 threads the bilayer; that stretch reads QLGLSVFVPLFVGQVVQNIFP. Topologically, residues 226–242 are cytoplasmic; it reads KQTKWCLTTFKLNKVGS. A helical membrane pass occupies residues 243–263; that stretch reads FMLLLIMFQSFSTAFAQHAFT. Residues 264 to 269 lie on the Extracellular side of the membrane; it reads SVSHAS. The chain crosses the membrane as a helical span at residues 270 to 290; it reads IIFLVFFNIGIYLFFTVLTFF. The Cytoplasmic segment spans residues 291 to 329; that stretch reads YSRPFWILRVFKEEPNESSSKLYRYSYAFFRPFYYNRKD. A helical transmembrane segment spans residues 330-350; that stretch reads TVAVMLCGPAKTAALGVSLVS. The Extracellular segment spans residues 351-361; sequence SQYGSHNPKLG. The chain crosses the membrane as a helical span at residues 362–382; the sequence is IILVPLVLYQAEQVMTANVLV. The Cytoplasmic segment spans residues 383–411; that stretch reads SFMRKWIHAEDKVPEDEETSVGSDNDPKK.

The protein belongs to the bile acid:sodium symporter (BASS) (TC 2.A.28) family.

It localises to the cell membrane. The protein localises to the bud neck. Solute carrier protein that negatively regulates the cytosolic homeostasis in response to high levels of extracellular calcium. The sequence is that of Solute carrier RCH1 from Candida albicans (strain SC5314 / ATCC MYA-2876) (Yeast).